Here is a 207-residue protein sequence, read N- to C-terminus: Cyclic di-AMP synthase CdaS (207 aa).

A coiled-coil region spans residues 13 to 37 (AFKGKIQVYLEQILGDASLILKTLH). The region spanning 63–205 (SFYLQSYIEE…DGVLYPLISP (143 aa)) is the DAC domain.

It belongs to the adenylate cyclase family. DacB/CdaS subfamily. In terms of assembly, forms dimers and probably also hexamers; the dimer may be active while the hexamer may not be active.

The enzyme catalyses 2 ATP = 3',3'-c-di-AMP + 2 diphosphate. Its function is as follows. One of 3 paralogous diadenylate cyclases (DAC) in this bacteria, catalyzing the condensation of 2 ATP molecules into cyclic di-AMP (c-di-AMP). Upon expression in E.coli leads to c-di-AMP synthesis. Overexpression of the hyperactive mutant (L44F) in the absence of c-di-AMP phosphodiesterase GdpP leads to growth defects in log phase (long curly cell filaments) that disappear upon sporulation; spore formation is normal, showing sporulation is insensitive to the excess c-di-AMP. In B.subtilis c-di-AMP is a second messenger that mediates growth, DNA repair and cell wall homeostasis; it is toxic when present in excess. In Bacillus subtilis (strain 168), this protein is Cyclic di-AMP synthase CdaS.